Here is a 481-residue protein sequence, read N- to C-terminus: UDP-N-acetylmuramate--L-alanine ligase (481 aa).

ATP is bound at residue 135-141; it reads GTHGKTT.

Belongs to the MurCDEF family.

It is found in the cytoplasm. The catalysed reaction is UDP-N-acetyl-alpha-D-muramate + L-alanine + ATP = UDP-N-acetyl-alpha-D-muramoyl-L-alanine + ADP + phosphate + H(+). The protein operates within cell wall biogenesis; peptidoglycan biosynthesis. Its function is as follows. Cell wall formation. The protein is UDP-N-acetylmuramate--L-alanine ligase of Nostoc punctiforme (strain ATCC 29133 / PCC 73102).